A 44-amino-acid polypeptide reads, in one-letter code: U4-ctenitoxin-Pk1a (44 aa).

5 disulfide bridges follow: C4/C18, C11/C24, C15/C42, C17/C33, and C26/C31.

Expressed by the venom gland.

The protein resides in the secreted. Functionally, neurotoxin. Causes spastic paralysis and death in mice within 10 minutes at dose levels of 3 ug per mouse. This Phoneutria keyserlingi (Brazilian wandering spider) protein is U4-ctenitoxin-Pk1a.